A 140-amino-acid chain; its full sequence is Transcription antitermination protein NusB (140 aa).

It belongs to the NusB family.

Functionally, involved in transcription antitermination. Required for transcription of ribosomal RNA (rRNA) genes. Binds specifically to the boxA antiterminator sequence of the ribosomal RNA (rrn) operons. The sequence is that of Transcription antitermination protein NusB from Streptococcus pneumoniae (strain JJA).